A 111-amino-acid chain; its full sequence is Large ribosomal subunit protein uL22 (111 aa).

This sequence belongs to the universal ribosomal protein uL22 family. Part of the 50S ribosomal subunit.

In terms of biological role, this protein binds specifically to 23S rRNA; its binding is stimulated by other ribosomal proteins, e.g. L4, L17, and L20. It is important during the early stages of 50S assembly. It makes multiple contacts with different domains of the 23S rRNA in the assembled 50S subunit and ribosome. Functionally, the globular domain of the protein is located near the polypeptide exit tunnel on the outside of the subunit, while an extended beta-hairpin is found that lines the wall of the exit tunnel in the center of the 70S ribosome. This is Large ribosomal subunit protein uL22 from Chlamydia pneumoniae (Chlamydophila pneumoniae).